Consider the following 570-residue polypeptide: Dihydroxy-acid dehydratase (570 aa).

Residues 1–25 (MSQQDSPANADHRRRHSSIVVDGPG) form a disordered region. [2Fe-2S] cluster is bound at residue cysteine 60. Aspartate 92 is a binding site for Mg(2+). [2Fe-2S] cluster is bound at residue cysteine 133. Aspartate 134 and lysine 135 together coordinate Mg(2+). Lysine 135 bears the N6-carboxylysine mark. Residue cysteine 202 coordinates [2Fe-2S] cluster. Glutamate 453 is a Mg(2+) binding site. Catalysis depends on serine 479, which acts as the Proton acceptor.

Belongs to the IlvD/Edd family. As to quaternary structure, homodimer. The cofactor is [2Fe-2S] cluster. Mg(2+) serves as cofactor.

It carries out the reaction (2R)-2,3-dihydroxy-3-methylbutanoate = 3-methyl-2-oxobutanoate + H2O. The catalysed reaction is (2R,3R)-2,3-dihydroxy-3-methylpentanoate = (S)-3-methyl-2-oxopentanoate + H2O. The protein operates within amino-acid biosynthesis; L-isoleucine biosynthesis; L-isoleucine from 2-oxobutanoate: step 3/4. It participates in amino-acid biosynthesis; L-valine biosynthesis; L-valine from pyruvate: step 3/4. In terms of biological role, functions in the biosynthesis of branched-chain amino acids. Catalyzes the dehydration of (2R,3R)-2,3-dihydroxy-3-methylpentanoate (2,3-dihydroxy-3-methylvalerate) into 2-oxo-3-methylpentanoate (2-oxo-3-methylvalerate) and of (2R)-2,3-dihydroxy-3-methylbutanoate (2,3-dihydroxyisovalerate) into 2-oxo-3-methylbutanoate (2-oxoisovalerate), the penultimate precursor to L-isoleucine and L-valine, respectively. This Chromohalobacter salexigens (strain ATCC BAA-138 / DSM 3043 / CIP 106854 / NCIMB 13768 / 1H11) protein is Dihydroxy-acid dehydratase.